A 309-amino-acid polypeptide reads, in one-letter code: Glutamyl-Q tRNA(Asp) synthetase (309 aa).

Residues 8-12 and Glu44 contribute to the L-glutamate site; that span reads RFSPS. The 'HIGH' region signature appears at 11-21; sequence PSPTGPLHAGS. The Zn(2+) site is built by Cys100, Cys102, Tyr126, and Cys130. Positions 205 and 223 each coordinate L-glutamate. The 'KMSKS' region signature appears at 261 to 265; that stretch reads KLSKQ. ATP is bound at residue Lys264.

It belongs to the class-I aminoacyl-tRNA synthetase family. GluQ subfamily. It depends on Zn(2+) as a cofactor.

Functionally, catalyzes the tRNA-independent activation of glutamate in presence of ATP and the subsequent transfer of glutamate onto a tRNA(Asp). Glutamate is transferred on the 2-amino-5-(4,5-dihydroxy-2-cyclopenten-1-yl) moiety of the queuosine in the wobble position of the QUC anticodon. In Albidiferax ferrireducens (strain ATCC BAA-621 / DSM 15236 / T118) (Rhodoferax ferrireducens), this protein is Glutamyl-Q tRNA(Asp) synthetase.